The sequence spans 123 residues: Small ribosomal subunit protein uS12 (123 aa).

Asp-89 bears the 3-methylthioaspartic acid mark.

It belongs to the universal ribosomal protein uS12 family. Part of the 30S ribosomal subunit. Contacts proteins S8 and S17. May interact with IF1 in the 30S initiation complex.

In terms of biological role, with S4 and S5 plays an important role in translational accuracy. Functionally, interacts with and stabilizes bases of the 16S rRNA that are involved in tRNA selection in the A site and with the mRNA backbone. Located at the interface of the 30S and 50S subunits, it traverses the body of the 30S subunit contacting proteins on the other side and probably holding the rRNA structure together. The combined cluster of proteins S8, S12 and S17 appears to hold together the shoulder and platform of the 30S subunit. The protein is Small ribosomal subunit protein uS12 of Gluconobacter oxydans (strain 621H) (Gluconobacter suboxydans).